Here is a 414-residue protein sequence, read N- to C-terminus: Acyltransferase MYCGRDRAFT_85486 (414 aa).

Polar residues predominate over residues 16-25; that stretch reads DGTSTVTIRP. The tract at residues 16–47 is disordered; it reads DGTSTVTIRPTQKAAPSEEPSQDTAPSKKDSN. His-329 lines the substrate pocket. The Proton acceptor role is filled by Glu-367.

It belongs to the lysine N-acyltransferase mbtK family.

It functions in the pathway siderophore biosynthesis. Its function is as follows. Acyltransferase; part of the gene cluster 14 that mediates the biosynthesis of a ferrichrome A-like siderophore which may contribute to organismal virulence. The first step of siderophore biosynthesis is performed by the HMG-CoA synthase (HMGS) MYCGRDRAFT_54740 which catalyzes the generation of HMG-CoA and CoA using acetoacetyl-CoA and acetyl-CoA as substrates. The enoyl-CoA isomerase/hydratase MYCGRDRAFT_76805 then catalyzes the conversion of HMG-CoA to methylglutaconyl-CoA. The acyltransferase MYCGRDRAFT_85486 then fuses methylglutaconyl-CoA with hydroxyornithine to yield methylglutaconyl hydroxyornithine. Methylglutaconyl hydroxyornithine is then available for use by the nonribosomal peptide synthetase NRPS2 to generate the ferrichrome A-like siderophore. In Zymoseptoria tritici (strain CBS 115943 / IPO323) (Speckled leaf blotch fungus), this protein is Acyltransferase MYCGRDRAFT_85486.